The chain runs to 307 residues: L-carnitine dehydrogenase (307 aa).

8 to 13 (GTGVIG) provides a ligand contact to NAD(+).

Belongs to the 3-hydroxyacyl-CoA dehydrogenase family. L-carnitine dehydrogenase subfamily. Homodimer.

Its subcellular location is the cytoplasm. It catalyses the reaction carnitine + NAD(+) = 3-dehydrocarnitine + NADH + H(+). Its pathway is amine and polyamine metabolism; carnitine metabolism. Catalyzes the NAD(+)-dependent oxidation of L-carnitine to 3-dehydrocarnitine. The chain is L-carnitine dehydrogenase from Oceanobacillus iheyensis (strain DSM 14371 / CIP 107618 / JCM 11309 / KCTC 3954 / HTE831).